We begin with the raw amino-acid sequence, 686 residues long: Antigen peptide transporter 2 (686 aa).

At 1 to 6 the chain is on the lumenal side; that stretch reads MRLPDL. A helical transmembrane segment spans residues 7-27; it reads RPWTSLLLVDAALLWLLQGPL. At 28 to 56 the chain is on the cytoplasmic side; sequence GTLLPQGLPGLWLEGTLRLGGLWGLLKLR. Residues 57–77 form a helical membrane-spanning segment; sequence GLLGFVGTLLLPLCLATPLTV. At 78-98 the chain is on the lumenal side; it reads SLRALVAGASRAPPARVASAP. A helical transmembrane segment spans residues 99–119; sequence WSWLLVGYGAAGLSWSLWAVL. Residues 120-148 lie on the Cytoplasmic side of the membrane; the sequence is SPPGAQEKEQDQVNNKVLMWRLLKLSRPD. Residues 149–169 form a helical membrane-spanning segment; the sequence is LPLLVAAFFFLVLAVLGETLI. An ABC transmembrane type-1 domain is found at 152–435; the sequence is LVAAFFFLVL…LVYIYGDMLS (284 aa). The Lumenal portion of the chain corresponds to 170 to 187; it reads PHYSGRVIDILGGDFDPH. Residues 188–208 traverse the membrane as a helical segment; the sequence is AFASAIFFMCLFSFGSSLSAG. Over 209–266 the chain is Cytoplasmic; that stretch reads CRGGCFTYTMSRINLRIREQLFSSLLRQDLGFFQETKTGELNSRLSSDTTLMSNWLPL. The chain crosses the membrane as a helical span at residues 267–287; sequence NANVLLRSLVKVVGLYGFMLS. Residues 288 to 293 lie on the Lumenal side of the membrane; that stretch reads ISPRLT. Residues 294–314 form a helical membrane-spanning segment; it reads LLSLLHMPFTIAAEKVYNTRH. The segment at 301-389 is part of the peptide-binding site; the sequence is PFTIAAEKVY…RRVLHLGVQM (89 aa). The Cytoplasmic segment spans residues 315 to 374; the sequence is QEVLREIQDAVARAGQVVREAVGGLQTVRSFGAEEHEVCRYKEALEQCRQLYWRRDLERA. A helical transmembrane segment spans residues 375-395; it reads LYLLVRRVLHLGVQMLMLSCG. The Lumenal portion of the chain corresponds to 396–408; that stretch reads LQQMQDGELTQGS. Residues 409–429 form a helical membrane-spanning segment; the sequence is LLSFMIYQESVGSYVQTLVYI. A part of the peptide-binding site region spans residues 414–433; it reads IYQESVGSYVQTLVYIYGDM. Topologically, residues 430–686 are cytoplasmic; it reads YGDMLSNVGA…EGKLQKLAQL (257 aa). One can recognise an ABC transporter domain in the interval 468–686; sequence VKFQDVSFAY…EGKLQKLAQL (219 aa). 503 to 510 is a binding site for ATP; it reads GPNGSGKS.

It belongs to the ABC transporter superfamily. ABCB family. MHC peptide exporter (TC 3.A.1.209) subfamily. Heterodimer of TAP1 and TAP2 (TAP1-TAP2). A component of the peptide loading complex (PLC), interacts via TAPBP with MHCI heterodimer; this interaction mediates peptide-MHCI assembly. Recruits TAPBP in a 1:1 stoichiometry. Interacts with classical MHCI such as HLA-A*02-B2M; this interaction is obligatory for the loading of peptide epitopes. Interacts with non-classical MHCI molecules including HLA-E-B2M and HLA-F-B2M as well as PLC component CALR before the peptide loading. In terms of assembly, (Microbial infection) Interacts with Epstein-Barr virus BLNF2a. As to quaternary structure, (Microbial infection) Interacts with herpes simplex virus US12/ICP47. (Microbial infection) Interacts with adenovirus E3-19K glycoprotein, which binds TAP1-TAP2 and acts as a TAPBP inhibitor, preventing TAP1-TAP2 association with MHCI. Mg(2+) is required as a cofactor.

The protein resides in the endoplasmic reticulum membrane. The enzyme catalyses a peptide antigen(in) + ATP + H2O = a peptide antigen(out) + ADP + phosphate + H(+). With respect to regulation, inhibited at high ER lumenal peptide concentrations. (Microbial infection) Inhibited by herpes simplex virus US12/ICP47 protein, which blocks the peptide-binding site of TAP1-TAP2. Its activity is regulated as follows. (Microbial infection) Inhibited by human cytomegalovirus US6 glycoprotein, which binds to the lumenal side of TAP1-TAP2 complex and inhibits peptide translocation by specifically blocking ATP-binding and preventing TAP1-TAP2 conformational rearrangement induced by peptide binding. Its function is as follows. ABC transporter associated with antigen processing. In complex with TAP1 mediates unidirectional translocation of peptide antigens from cytosol to endoplasmic reticulum (ER) for loading onto MHC class I (MHCI) molecules. Uses the chemical energy of ATP to export peptides against the concentration gradient. During the transport cycle alternates between 'inward-facing' state with peptide binding site facing the cytosol to 'outward-facing' state with peptide binding site facing the ER lumen. Peptide antigen binding to ATP-loaded TAP1-TAP2 induces a switch to hydrolysis-competent 'outward-facing' conformation ready for peptide loading onto nascent MHCI molecules. Subsequently ATP hydrolysis resets the transporter to the 'inward facing' state for a new cycle. Typically transports intracellular peptide antigens of 8 to 13 amino acids that arise from cytosolic proteolysis via IFNG-induced immunoproteasome. Binds peptides with free N- and C-termini, the first three and the C-terminal residues being critical. Preferentially selects peptides having a highly hydrophobic residue at position 3 and hydrophobic or charged residues at the C-terminal anchor. Proline at position 2 has the most destabilizing effect. As a component of the peptide loading complex (PLC), acts as a molecular scaffold essential for peptide-MHCI assembly and antigen presentation. This Homo sapiens (Human) protein is Antigen peptide transporter 2.